The chain runs to 179 residues: Apoptosis regulator Bcl-2 homolog (179 aa).

The short motif at Glu76–Ala95 is the BH1 element. The BH2 motif lies at Pro126 to Ser141.

It belongs to the Bcl-2 family. As to quaternary structure, interacts with host BECN1 (via BH3 homology domain); this interaction allows the virus to inhibit BECN1, and thus autophagy. Interacts with host BID. Interacts with host BAX.

It localises to the host mitochondrion. It is found in the host endoplasmic reticulum. Suppresses apoptosis in host cell to promote the viral replication. Has the ability to potentially bind to all the members of the proapoptotic Bcl-2 family. Inhibits autophagy by interacting with host Beclin 1 (BECN1). This is Apoptosis regulator Bcl-2 homolog from African swine fever virus (isolate Pig/Kenya/KEN-50/1950) (ASFV).